The sequence spans 472 residues: Phosphoenolpyruvate carboxykinase (ATP), glycosomal (472 aa).

221–228 is a binding site for ATP; sequence GLSGTGKT.

The protein belongs to the phosphoenolpyruvate carboxykinase (ATP) family. Homodimer.

The protein resides in the glycosome. The catalysed reaction is oxaloacetate + ATP = phosphoenolpyruvate + ADP + CO2. Its pathway is carbohydrate biosynthesis; gluconeogenesis. Its function is as follows. P60 has the capability to bind to microtubules and membrane vesicles in vitro. The chain is Phosphoenolpyruvate carboxykinase (ATP), glycosomal from Trypanosoma brucei brucei.